Reading from the N-terminus, the 1811-residue chain is ADP-ribosylation factor guanine nucleotide-exchange factor sec71 (1811 aa).

Disordered regions lie at residues 1 to 108 (MTDL…TSEA) and 316 to 336 (INMNKSSSNGTPDRANSPIPS). 3 stretches are compositionally biased toward basic and acidic residues: residues 33–49 (STIKSRVSDEIDEHDSI), 57–73 (KSIEINDKNLEAEKDIE), and 80–91 (PPEDDLDSRSIE). The residue at position 40 (serine 40) is a Phosphoserine. 2 stretches are compositionally biased toward polar residues: residues 92–108 (SEQTGTLSKQTTSTSEA) and 316–326 (INMNKSSSNGT). Threonine 326 carries the phosphothreonine modification. 2 positions are modified to phosphoserine: serine 332 and serine 353. Positions 533–537 (NYDCI) match the HUS box motif. Basic and acidic residues predominate over residues 643–663 (TAKDDETESTSKGEEPQKSKS). The interval 643-688 (TAKDDETESTSKGEEPQKSKSEPPSAGINSTSMDNLESSGQALATD) is disordered. Polar residues predominate over residues 669–688 (GINSTSMDNLESSGQALATD). Residues 692–880 (QFENLKHRKK…TEVYEEIQKN (189 aa)) enclose the SEC7 domain. Position 741 is a phosphoserine (serine 741). Threonine 742 bears the Phosphothreonine mark. Residue aspartate 812 coordinates Mg(2+). The segment at 889 to 1103 (DPTSNFPEIP…TTKPLRKSLD (215 aa)) is HDS1 domain.

It localises to the cytoplasm. The protein resides in the golgi apparatus. Its subcellular location is the trans-Golgi network. The protein localises to the cytoplasmic vesicle. It is found in the COPI-coated vesicle membrane. It localises to the COPII-coated vesicle membrane. Its function is as follows. Guanine exchange factor that acts as an activator of arf1 at the trans-Golgi net-work and is thus involved in vesicular budding and traffic between compartments of the Golgi apparatus. Activation of Arf (ADP-ribosylation factor) GTPases is essential for vesicle formation via recruitment of cargo adapters and coat proteins necessary for Golgi trafficking. Involved in tunicamycin-induced ER stress response and subsequent apoptosis. The sequence is that of ADP-ribosylation factor guanine nucleotide-exchange factor sec71 from Schizosaccharomyces pombe (strain 972 / ATCC 24843) (Fission yeast).